The chain runs to 546 residues: CTP synthase (546 aa).

Residues 1–269 (MNSNTKIIFV…DAKLVELLNL (269 aa)) form an amidoligase domain region. Ser-16 provides a ligand contact to CTP. Ser-16 serves as a coordination point for UTP. ATP contacts are provided by residues 17–22 (SLGKGV) and Asp-74. Residues Asp-74 and Glu-143 each coordinate Mg(2+). CTP is bound by residues 150 to 152 (DIE), 190 to 195 (KTKPTQ), and Lys-226. Residues 190 to 195 (KTKPTQ) and Lys-226 each bind UTP. One can recognise a Glutamine amidotransferase type-1 domain in the interval 294–546 (TIAMVGKYVS…IQAAIENSNN (253 aa)). Position 356 (Gly-356) interacts with L-glutamine. Cys-383 (nucleophile; for glutamine hydrolysis) is an active-site residue. Residues 384–387 (LGMQ), Glu-407, and Arg-474 contribute to the L-glutamine site. Residues His-519 and Glu-521 contribute to the active site.

It belongs to the CTP synthase family. As to quaternary structure, homotetramer.

The enzyme catalyses UTP + L-glutamine + ATP + H2O = CTP + L-glutamate + ADP + phosphate + 2 H(+). The catalysed reaction is L-glutamine + H2O = L-glutamate + NH4(+). It carries out the reaction UTP + NH4(+) + ATP = CTP + ADP + phosphate + 2 H(+). It functions in the pathway pyrimidine metabolism; CTP biosynthesis via de novo pathway; CTP from UDP: step 2/2. Its activity is regulated as follows. Allosterically activated by GTP, when glutamine is the substrate; GTP has no effect on the reaction when ammonia is the substrate. The allosteric effector GTP functions by stabilizing the protein conformation that binds the tetrahedral intermediate(s) formed during glutamine hydrolysis. Inhibited by the product CTP, via allosteric rather than competitive inhibition. Its function is as follows. Catalyzes the ATP-dependent amination of UTP to CTP with either L-glutamine or ammonia as the source of nitrogen. Regulates intracellular CTP levels through interactions with the four ribonucleotide triphosphates. This Francisella tularensis subsp. mediasiatica (strain FSC147) protein is CTP synthase.